The primary structure comprises 239 residues: Ribonuclease HII (239 aa).

The region spanning 18–231 (KIIVGLDEAG…SKNLLKEIEE (214 aa)) is the RNase H type-2 domain. Residues aspartate 24, glutamate 25, and aspartate 125 each coordinate a divalent metal cation.

Belongs to the RNase HII family. It depends on Mn(2+) as a cofactor. The cofactor is Mg(2+).

The protein localises to the cytoplasm. It carries out the reaction Endonucleolytic cleavage to 5'-phosphomonoester.. Its function is as follows. Endonuclease that specifically degrades the RNA of RNA-DNA hybrids. This is Ribonuclease HII from Methanococcus maripaludis (strain C6 / ATCC BAA-1332).